Reading from the N-terminus, the 249-residue chain is 23S rRNA (guanosine-2'-O-)-methyltransferase RlmB (249 aa).

3 residues coordinate S-adenosyl-L-methionine: G200, I220, and L229.

The protein belongs to the class IV-like SAM-binding methyltransferase superfamily. RNA methyltransferase TrmH family. RlmB subfamily.

The protein resides in the cytoplasm. The catalysed reaction is guanosine(2251) in 23S rRNA + S-adenosyl-L-methionine = 2'-O-methylguanosine(2251) in 23S rRNA + S-adenosyl-L-homocysteine + H(+). Its function is as follows. Specifically methylates the ribose of guanosine 2251 in 23S rRNA. The sequence is that of 23S rRNA (guanosine-2'-O-)-methyltransferase RlmB from Xanthomonas campestris pv. campestris (strain ATCC 33913 / DSM 3586 / NCPPB 528 / LMG 568 / P 25).